Reading from the N-terminus, the 333-residue chain is Calcium uniporter protein, mitochondrial (333 aa).

A mitochondrion-targeting transit peptide spans 1–22 (MRNGRCLVTPFVTAQRLANLRN). The Mitochondrial matrix portion of the chain corresponds to 23–214 (TLWNRQQIAF…QECEAHTDRV (192 aa)). Positions 180 to 193 (KKLLLQLENAETLL) form a coiled coil. Residues 195-213 (PLHDAKRKIEQECEAHTDR) form an outer juxtamembrane helix (OJMH) region. The chain crosses the membrane as a helical span at residues 215 to 234 (MWAGFAAMGVQTGLFARLTW). Over 235–243 (WEYSWDIME) the chain is Mitochondrial intermembrane. The short motif at 239–247 (WDIMEPVTY) is the Selectivity filter element. Glu-243 is a binding site for Ca(2+). The helical transmembrane segment at 244–260 (PVTYFATYSTVCATFGY) threads the bilayer. Residues 261-333 (YLYTQQSFEY…SYLSNLEAEK (73 aa)) are Mitochondrial matrix-facing. The tract at residues 262–271 (LYTQQSFEYP) is inner juxtamembrane helix (IJMH). Residues 289-316 (QNFDIEKYNRLVTEVDELRNQLKRMRDP) are a coiled coil.

The protein belongs to the MCU (TC 1.A.77) family.

It is found in the mitochondrion inner membrane. The catalysed reaction is Ca(2+)(in) = Ca(2+)(out). Its activity is regulated as follows. Inhibited by ruthenium red or its derivative Ru360; possibly by obstructing the pore. Mitochondrial inner membrane calcium uniporter that mediates calcium uptake into mitochondria. Constitutes a pore-forming and calcium-conducting subunit. Mitochondrial calcium homeostasis plays key roles in cellular physiology and regulates cell bioenergetics, cytoplasmic calcium signals and activation of cell death pathways. Required for rapid mitochondrial calcium uptake and mitochondrial reactive oxygen species (mtROS) production after wounding. In addition, together with mitochondrial calcium regulator micu-1, required for mitochondrial calcium uptake following axon injury in PLM touch receptor neurons. The chain is Calcium uniporter protein, mitochondrial from Caenorhabditis elegans.